The chain runs to 333 residues: Ferrochelatase (333 aa).

Positions 202 and 284 each coordinate Fe cation.

The protein belongs to the ferrochelatase family.

Its subcellular location is the cytoplasm. It catalyses the reaction heme b + 2 H(+) = protoporphyrin IX + Fe(2+). The protein operates within porphyrin-containing compound metabolism; protoheme biosynthesis; protoheme from protoporphyrin-IX: step 1/1. Catalyzes the ferrous insertion into protoporphyrin IX. The sequence is that of Ferrochelatase from Francisella tularensis subsp. tularensis (strain FSC 198).